The chain runs to 608 residues: Phosphogluconate dehydratase (608 aa).

[4Fe-4S] cluster is bound by residues Cys-154 and Cys-221.

It belongs to the IlvD/Edd family. It depends on [4Fe-4S] cluster as a cofactor.

It catalyses the reaction 6-phospho-D-gluconate = 2-dehydro-3-deoxy-6-phospho-D-gluconate + H2O. Its pathway is carbohydrate metabolism; Entner-Doudoroff pathway. In terms of biological role, catalyzes the dehydration of 6-phospho-D-gluconate to 2-dehydro-3-deoxy-6-phospho-D-gluconate. The protein is Phosphogluconate dehydratase of Helicobacter pylori (strain J99 / ATCC 700824) (Campylobacter pylori J99).